The sequence spans 577 residues: E3 ubiquitin protein ligase RIN3 (577 aa).

6 helical membrane-spanning segments follow: residues Ile3 to Trp23, Thr58 to Leu78, Gly120 to Ala140, Tyr162 to Ile182, Tyr191 to Ile211, and Tyr272 to Leu292. The RING-type; atypical zinc-finger motif lies at Cys337 to Arg379. A CUE domain is found at Ser537 to Met577.

As to quaternary structure, interacts (via C-terminus) with RPM1 (via N-terminus).

It localises to the membrane. It carries out the reaction S-ubiquitinyl-[E2 ubiquitin-conjugating enzyme]-L-cysteine + [acceptor protein]-L-lysine = [E2 ubiquitin-conjugating enzyme]-L-cysteine + N(6)-ubiquitinyl-[acceptor protein]-L-lysine.. The protein operates within protein modification; protein ubiquitination. E3 ubiquitin protein ligase that acts as a positive regulator of RPM1- and RPS2-dependent hypersensitive response (HR), in association with RIN2. Probably not required for RPM1 degradation during HR. The chain is E3 ubiquitin protein ligase RIN3 (RIN3) from Arabidopsis thaliana (Mouse-ear cress).